Reading from the N-terminus, the 282-residue chain is MKVIDSISTLRQTVNAWRRNGESVGFVPTMGNLHDGHLKLVKKAKAHNDNVVVSIFVNPMQFGANEDLDAYPRTIEEDKAKLISVGADAVFLPSVAEMYPAGLDAQTFVEVPGISDSHCGASRPGHFRGVATVVTKLFNMVQPDDAFFGEKDFQQLQVIRALARDLSMAVTIHGVPTEREASGLAMSSRNGYLSKEEKATASAIYEEMQRVKAGIEGGNIDFSELEDAMVTNLEAKGFKKDYCQVVNASTFKAATANDKELVLLVAMFMGKTRLIDNLQITR.

Met-30 to His-37 is an ATP binding site. His-37 serves as the catalytic Proton donor. Gln-61 contributes to the (R)-pantoate binding site. Gln-61 contacts beta-alanine. Gly-149–Asp-152 serves as a coordination point for ATP. A (R)-pantoate-binding site is contributed by Gln-155. Residue Met-186–Arg-189 participates in ATP binding.

Belongs to the pantothenate synthetase family. Homodimer.

Its subcellular location is the cytoplasm. It carries out the reaction (R)-pantoate + beta-alanine + ATP = (R)-pantothenate + AMP + diphosphate + H(+). It functions in the pathway cofactor biosynthesis; (R)-pantothenate biosynthesis; (R)-pantothenate from (R)-pantoate and beta-alanine: step 1/1. Functionally, catalyzes the condensation of pantoate with beta-alanine in an ATP-dependent reaction via a pantoyl-adenylate intermediate. The chain is Pantothenate synthetase from Alteromonas mediterranea (strain DSM 17117 / CIP 110805 / LMG 28347 / Deep ecotype).